A 218-amino-acid chain; its full sequence is Probable GTP-binding protein EngB (218 aa).

One can recognise an EngB-type G domain in the interval 44–218 (DRIEVCFAGR…LRATIATIET (175 aa)). Residues 52 to 59 (GRSNVGKS), 79 to 83 (GRTQE), 97 to 100 (DLPG), 164 to 167 (TKSD), and 198 to 200 (TSS) contribute to the GTP site. Mg(2+) contacts are provided by serine 59 and threonine 81.

It belongs to the TRAFAC class TrmE-Era-EngA-EngB-Septin-like GTPase superfamily. EngB GTPase family. The cofactor is Mg(2+).

Its function is as follows. Necessary for normal cell division and for the maintenance of normal septation. The polypeptide is Probable GTP-binding protein EngB (Jannaschia sp. (strain CCS1)).